We begin with the raw amino-acid sequence, 224 residues long: MESGAYGAPRAGGSFDLRRFLKQPQVVVRAVCLVFALIVFSCIFGEGYSNTHDSQQQYCVFNRNEDACRYGSAIGVLAFLASAFFFVVDIYFPQISNATDRKYLVIGDLLFSALWTFLWFVGFCFLTNQWAATKKNDVHVEADSARAAITFSFFSIFSWCVLAFLAYQRYKAGVDEFIQNYVDPTPDPSTAYASYPGVPADTYQQPPFTQNAESTEGYQPPPVY.

The residue at position 1 (Met1) is an N-acetylmethionine. Position 3 is a phosphoserine (Ser3). Residues 20–171 (FLKQPQVVVR…LAFLAYQRYK (152 aa)) enclose the MARVEL domain. Transmembrane regions (helical) follow at residues 26–46 (VVVR…IFGE), 73–93 (AIGV…IYFP), 105–125 (VIGD…GFCF), and 147–167 (AAIT…FLAY). The disordered stretch occupies residues 196–224 (PGVPADTYQQPPFTQNAESTEGYQPPPVY). Positions 202–217 (TYQQPPFTQNAESTEG) are enriched in polar residues.

Belongs to the synaptogyrin family. In terms of processing, may be tyrosine phosphorylated by Src.

The protein resides in the cytoplasmic vesicle membrane. It is found in the cytoplasmic vesicle. The protein localises to the secretory vesicle. It localises to the synaptic vesicle membrane. Its function is as follows. May play a role in regulated exocytosis. In neuronal cells, modulates the localization of synaptophysin/SYP into synaptic-like microvesicles and may therefore play a role in the formation and/or the maturation of this vesicles. May also play a role in GLUT4 storage and transport to the plasma membrane. The protein is Synaptogyrin-2 of Bos taurus (Bovine).